The chain runs to 124 residues: MAQHAFQDQEQEEGRNSRQQKRKSFEDTMKPKAVELTITETLWDQVLMAFKDIQNELQEDARTRGMSSVTPTSSASKIGTKTSDAATTPKLGRLLSGTGEQPSGIQAQNLRGQSSDQSACYPQP.

2 disordered regions span residues 1 to 31 (MAQHAFQDQEQEEGRNSRQQKRKSFEDTMKP) and 59 to 124 (EDAR…YPQP). 2 stretches are compositionally biased toward polar residues: residues 65-86 (GMSSVTPTSSASKIGTKTSDAA) and 98-124 (TGEQPSGIQAQNLRGQSSDQSACYPQP).

This is an uncharacterized protein from Bos taurus (Bovine).